The chain runs to 288 residues: Alpha/beta hydrolase domain-containing protein 17B (288 aa).

Catalysis depends on charge relay system residues serine 170, aspartate 235, and histidine 264.

Belongs to the AB hydrolase superfamily. ABHD17 family. Palmitoylated on cysteine residues located in a cysteine cluster at the N-terminus which promotes membrane localization.

It is found in the cell membrane. The protein localises to the recycling endosome membrane. It localises to the cell projection. Its subcellular location is the dendritic spine. The protein resides in the postsynaptic density membrane. The catalysed reaction is S-hexadecanoyl-L-cysteinyl-[protein] + H2O = L-cysteinyl-[protein] + hexadecanoate + H(+). Hydrolyzes fatty acids from S-acylated cysteine residues in proteins. This Xenopus tropicalis (Western clawed frog) protein is Alpha/beta hydrolase domain-containing protein 17B.